The chain runs to 158 residues: Small ribosomal subunit protein uS9 (158 aa).

Polar residues predominate over residues 1–10 (MSDTMQSLDQ). The interval 1–35 (MSDTMQSLDQLSALKTAAPDAPKREKKVDKQGRAY) is disordered. Over residues 21–32 (APKREKKVDKQG) the composition is skewed to basic and acidic residues.

This sequence belongs to the universal ribosomal protein uS9 family.

This is Small ribosomal subunit protein uS9 from Afipia carboxidovorans (strain ATCC 49405 / DSM 1227 / KCTC 32145 / OM5) (Oligotropha carboxidovorans).